A 1132-amino-acid polypeptide reads, in one-letter code: MELFQAKDHYILQQGERALWCSRRDGGLQLRPATDLLLAWNPICLGLVEGVIGKIQLHSDLPWWLILIRQKALVGKLPGDHEVCKVTKIAVLSLSEMEPQDLELELCKKHHFGINKPEKIIPSPDDSKFLLKTFTHIKSNVSAPNKKKVKESKEKEKLERRLLEELLKMFMDSESFYYSLTYDLTNSVQRQSTGERDGRPLWQKVDDRFFWNKYMIQDLTEIGTPDVDFWIIPMIQGFVQIEELVVNYTESSDDEKSSPETPPQESTCVDDIHPRFLVALISRRSRHRAGMRYKRRGVDKNGNVANYVETEQLIHVHNHTLSFVQTRGSVPVFWSQVGYRYNPRPRLDRSEKETVAYFCAHFEEQLNIYKKQVIINLVDQAGREKIIGDAYLKQVLLFNNSHLTYVSFDFHEHCRGMKFENVQTLTDAIYDIILDMKWCWVDEAGVICKQEGIFRVNCMDCLDRTNVVQAAIARVVMEQQLKKLGVMPPEQPLPVKCNRIYQIMWANNGDSISRQYAGTAALKGDFTRTGERKLAGVMKDGVNSANRYYLNRFKDAYRQAVIDLMQGIPVTEDLYSIFTKEKEHEALHKENQRSHQELISQLLQSYMKLLLPDDEKFHGGWALIDCDPSLIDATHRDVDVLLLLSNSAYYVAYYDDEVDKVNQYQRLSLENLEKIEIGPEPTLFGKPKFSCMRLHYRYKEASGYFHTLRAVMRNPEEDGKDTLQCIAEMLQITKQAMGSDLPIIEKKLERKSSKPHEDIIGIRSQNQGSLAQGKNFLMSKFSSLNQKVKQTKSNVNIGNLRKLGNFTKPEMKVNFLKPNLKVNLWKSDSSLETMENTGVMDKVQAESDGDMSSDNDSYHSDEFLTNSKSDEDRQLANSLESVGPIDYVLPSCGIIASAPRLGSRSQSLSSTDSSVHAPSEITVAHGSGLGKGQESPLKKSPSAGDVHILTGFAKPMDIYCHRFVQDAQNKVTHLSETRSVSQQASQERNQMTNQVSNETQSESTEQTPSRPSQLDVSLSATGPQFLSVEPAHSVASQKTPTSASSMLELETGLHVTPSPSESSSSRAVSPFAKIRSSMVQVASITQAGLTHGINFAVSKVQKSPPEPEIINQVQQNELKKMFIQCQTRIIQI.

In terms of domain architecture, SAC spans 167–518; that stretch reads LKMFMDSESF…GDSISRQYAG (352 aa). The region spanning 593–760 is the hSac2 domain; that stretch reads RSHQELISQL…KSSKPHEDII (168 aa). A phosphoserine mark is found at Ser827 and Ser830. The disordered stretch occupies residues 846-875; the sequence is ESDGDMSSDNDSYHSDEFLTNSKSDEDRQL. Basic and acidic residues predominate over residues 856–874; sequence DSYHSDEFLTNSKSDEDRQ. Phosphoserine is present on residues Ser878, Ser881, Ser907, and Ser910. 2 disordered regions span residues 923 to 942 and 974 to 1017; these read VAHG…KSPS and LSET…LDVS. The residue at position 1103 (Ser1103) is a Phosphoserine.

Homodimer. Interacts with OCRL and RAB5A. Interacts with INPP5B and INPP4A. Interacts with STAT3; the interaction is independent of STAT3 'Tyr-705' phosphorylation status. In terms of tissue distribution, ubiquitous. Highly expressed in brain.

Its subcellular location is the membrane. The protein localises to the clathrin-coated pit. It localises to the early endosome. It is found in the recycling endosome. It catalyses the reaction a myo-inositol phosphate + H2O = myo-inositol + phosphate. Inositol 4-phosphatase which mainly acts on phosphatidylinositol 4-phosphate. May be functionally linked to OCRL, which converts phosphatidylinositol 4,5-bisphosphate to phosphatidylinositol, for a sequential dephosphorylation of phosphatidylinositol 4,5-bisphosphate at the 5 and 4 position of inositol, thus playing an important role in the endocytic recycling. Regulator of TF:TFRC and integrins recycling pathway, is also involved in cell migration mechanisms. Modulates AKT/GSK3B pathway by decreasing AKT and GSK3B phosphorylation. Negatively regulates STAT3 signaling pathway through inhibition of STAT3 phosphorylation and translocation to the nucleus. Functionally important modulator of cardiac myocyte size and of the cardiac response to stress. May play a role as negative regulator of axon regeneration after central nervous system injuries. In Homo sapiens (Human), this protein is Phosphatidylinositide phosphatase SAC2.